Here is a 499-residue protein sequence, read N- to C-terminus: Glycerol kinase (499 aa).

Thr13 serves as a coordination point for ADP. Thr13, Thr14, and Ser15 together coordinate ATP. Thr13 contacts sn-glycerol 3-phosphate. Residue Arg17 coordinates ADP. Residues Arg83, Glu84, Tyr135, and Asp245 each contribute to the sn-glycerol 3-phosphate site. Residues Arg83, Glu84, Tyr135, Asp245, and Gln246 each coordinate glycerol. Positions 267 and 310 each coordinate ADP. ATP is bound by residues Thr267, Gly310, Gln314, and Gly411. Gly411 and Asn415 together coordinate ADP.

It belongs to the FGGY kinase family.

The enzyme catalyses glycerol + ATP = sn-glycerol 3-phosphate + ADP + H(+). It functions in the pathway polyol metabolism; glycerol degradation via glycerol kinase pathway; sn-glycerol 3-phosphate from glycerol: step 1/1. Its activity is regulated as follows. Inhibited by fructose 1,6-bisphosphate (FBP). Functionally, key enzyme in the regulation of glycerol uptake and metabolism. Catalyzes the phosphorylation of glycerol to yield sn-glycerol 3-phosphate. This is Glycerol kinase from Xanthomonas euvesicatoria pv. vesicatoria (strain 85-10) (Xanthomonas campestris pv. vesicatoria).